A 288-amino-acid chain; its full sequence is Ninja-family protein 6 (288 aa).

2 disordered regions span residues 1 to 50 (MASR…KRPR) and 66 to 207 (LHAD…TRTG). Positions 12-23 (AGEGAGPPGDAG) are enriched in gly residues. Over residues 76–86 (LPLLRTTSLPT) the composition is skewed to low complexity. Basic and acidic residues predominate over residues 91–103 (ERWRRREMQSRRR). Polar residues predominate over residues 131–173 (RRSNASQGSNSASTTEQGIGGSMFNQSADAKSPSTSDNRNQND). Residues 195–207 (RLRTLGSLTTRTG) are compositionally biased toward low complexity.

The protein belongs to the Ninja family.

It localises to the nucleus. This Zea mays (Maize) protein is Ninja-family protein 6.